The primary structure comprises 169 residues: Protein GrpE (169 aa).

The disordered stretch occupies residues 1 to 25 (MSEEKQNGQIQEETVENSENQNNEL). A compositionally biased stretch (polar residues) spans 7–23 (NGQIQEETVENSENQNN).

The protein belongs to the GrpE family. As to quaternary structure, homodimer.

Its subcellular location is the cytoplasm. In terms of biological role, participates actively in the response to hyperosmotic and heat shock by preventing the aggregation of stress-denatured proteins, in association with DnaK and GrpE. It is the nucleotide exchange factor for DnaK and may function as a thermosensor. Unfolded proteins bind initially to DnaJ; upon interaction with the DnaJ-bound protein, DnaK hydrolyzes its bound ATP, resulting in the formation of a stable complex. GrpE releases ADP from DnaK; ATP binding to DnaK triggers the release of the substrate protein, thus completing the reaction cycle. Several rounds of ATP-dependent interactions between DnaJ, DnaK and GrpE are required for fully efficient folding. The chain is Protein GrpE from Campylobacter lari (strain RM2100 / D67 / ATCC BAA-1060).